A 628-amino-acid chain; its full sequence is Neutral/alkaline invertase 1, mitochondrial (628 aa).

The transit peptide at 1-35 directs the protein to the mitochondrion; it reads MAAAAISHLRRGAPRHARALLYLSTRRFSSSSAAG. Residues 79–90 show a composition bias toward low complexity; sequence ASSAPPLESPPI. A disordered region spans residues 79 to 113; it reads ASSAPPLESPPIEELPDDATPPPEEEPGLPAPEKD.

The protein belongs to the glycosyl hydrolase 100 family. As to expression, expressed in roots, leaf and stems.

It is found in the mitochondrion. The enzyme catalyses Hydrolysis of terminal non-reducing beta-D-fructofuranoside residues in beta-D-fructofuranosides.. Functionally, mitochondrial invertase that cleaves sucrose into glucose and fructose. The protein is Neutral/alkaline invertase 1, mitochondrial of Oryza sativa subsp. japonica (Rice).